The primary structure comprises 248 residues: Ubiquinone/menaquinone biosynthesis C-methyltransferase UbiE (248 aa).

Residues S68 and D92 each coordinate S-adenosyl-L-methionine.

It belongs to the class I-like SAM-binding methyltransferase superfamily. MenG/UbiE family.

The enzyme catalyses a 2-demethylmenaquinol + S-adenosyl-L-methionine = a menaquinol + S-adenosyl-L-homocysteine + H(+). It carries out the reaction a 2-methoxy-6-(all-trans-polyprenyl)benzene-1,4-diol + S-adenosyl-L-methionine = a 5-methoxy-2-methyl-3-(all-trans-polyprenyl)benzene-1,4-diol + S-adenosyl-L-homocysteine + H(+). It participates in quinol/quinone metabolism; menaquinone biosynthesis; menaquinol from 1,4-dihydroxy-2-naphthoate: step 2/2. Its pathway is cofactor biosynthesis; ubiquinone biosynthesis. Methyltransferase required for the conversion of demethylmenaquinol (DMKH2) to menaquinol (MKH2) and the conversion of 2-polyprenyl-6-methoxy-1,4-benzoquinol (DDMQH2) to 2-polyprenyl-3-methyl-6-methoxy-1,4-benzoquinol (DMQH2). The sequence is that of Ubiquinone/menaquinone biosynthesis C-methyltransferase UbiE from Rickettsia akari (strain Hartford).